We begin with the raw amino-acid sequence, 419 residues long: Hyaluronan synthase (419 aa).

5 helical membrane passes run 8-28 (LIVL…MYLF), 33-53 (VGIY…LSFL), 318-338 (IVAL…VAIG), 345-365 (AIQL…IVAL), and 376-396 (PASF…LQPL).

This sequence belongs to the NodC/HAS family. It depends on Mg(2+) as a cofactor.

It is found in the cell membrane. The catalysed reaction is [hyaluronan](n) + UDP-N-acetyl-alpha-D-glucosamine = N-acetyl-beta-D-glucosaminyl-(1-&gt;4)-[hyaluronan](n) + UDP + H(+). It carries out the reaction N-acetyl-beta-D-glucosaminyl-(1-&gt;4)-[hyaluronan](n) + UDP-alpha-D-glucuronate = [hyaluronan](n+1) + UDP + H(+). Its pathway is glycan biosynthesis; hyaluronan biosynthesis. Its function is as follows. Glycosaminoglycan synthesis. The hyaluronic acid capsule is involved in the pathogenicity of group A Streptococci; it may be the major virulence determinant. This is Hyaluronan synthase (hasA) from Streptococcus pyogenes serotype M3 (strain ATCC BAA-595 / MGAS315).